A 223-amino-acid chain; its full sequence is Endonuclease NucS (223 aa).

It belongs to the NucS endonuclease family.

Its subcellular location is the cytoplasm. In terms of biological role, cleaves both 3' and 5' ssDNA extremities of branched DNA structures. The polypeptide is Endonuclease NucS (Streptomyces avermitilis (strain ATCC 31267 / DSM 46492 / JCM 5070 / NBRC 14893 / NCIMB 12804 / NRRL 8165 / MA-4680)).